The chain runs to 276 residues: Dermonecrotic toxin LlSicTox-alphaIV2iv (276 aa).

His5 is a catalytic residue. Glu25 and Asp27 together coordinate Mg(2+). His41 serves as the catalytic Nucleophile. Disulfide bonds link Cys45–Cys51 and Cys47–Cys193. Mg(2+) is bound at residue Asp85.

Belongs to the arthropod phospholipase D family. Class II subfamily. Requires Mg(2+) as cofactor. Expressed by the venom gland.

Its subcellular location is the secreted. It catalyses the reaction an N-(acyl)-sphingosylphosphocholine = an N-(acyl)-sphingosyl-1,3-cyclic phosphate + choline. It carries out the reaction an N-(acyl)-sphingosylphosphoethanolamine = an N-(acyl)-sphingosyl-1,3-cyclic phosphate + ethanolamine. The enzyme catalyses a 1-acyl-sn-glycero-3-phosphocholine = a 1-acyl-sn-glycero-2,3-cyclic phosphate + choline. The catalysed reaction is a 1-acyl-sn-glycero-3-phosphoethanolamine = a 1-acyl-sn-glycero-2,3-cyclic phosphate + ethanolamine. Its function is as follows. Dermonecrotic toxins cleave the phosphodiester linkage between the phosphate and headgroup of certain phospholipids (sphingolipid and lysolipid substrates), forming an alcohol (often choline) and a cyclic phosphate. This toxin acts on sphingomyelin (SM). It may also act on ceramide phosphoethanolamine (CPE), lysophosphatidylcholine (LPC) and lysophosphatidylethanolamine (LPE), but not on lysophosphatidylserine (LPS), and lysophosphatidylglycerol (LPG). It acts by transphosphatidylation, releasing exclusively cyclic phosphate products as second products. Induces dermonecrosis, hemolysis, increased vascular permeability, edema, inflammatory response, and platelet aggregation. This is Dermonecrotic toxin LlSicTox-alphaIV2iv from Loxosceles laeta (South American recluse spider).